The chain runs to 438 residues: ATP-dependent RNA helicase RhlB (438 aa).

The Q motif motif lies at 9 to 37 (QRFADLPLHPEVKQALAENGFEFCTPIQA). The Helicase ATP-binding domain occupies 40 to 219 (LPVLLQSKDI…YDHMNEPVKV (180 aa)). 53 to 60 (AQTGTGKT) contributes to the ATP binding site. The short motif at 165–168 (DEAD) is the DEAD box element. The 148-residue stretch at 243–390 (KMRLLLTLIE…VSNYDSEALL (148 aa)) folds into the Helicase C-terminal domain. The disordered stretch occupies residues 395 to 438 (TPAKIHRKHPSGTRNLRDRSGASRPGAQRSGARPPRHDRTRRHS). Over residues 428-438 (PPRHDRTRRHS) the composition is skewed to basic residues.

This sequence belongs to the DEAD box helicase family. RhlB subfamily. As to quaternary structure, component of the RNA degradosome, which is a multiprotein complex involved in RNA processing and mRNA degradation.

It localises to the cytoplasm. The enzyme catalyses ATP + H2O = ADP + phosphate + H(+). Its function is as follows. DEAD-box RNA helicase involved in RNA degradation. Has RNA-dependent ATPase activity and unwinds double-stranded RNA. This is ATP-dependent RNA helicase RhlB from Shewanella baltica (strain OS185).